Consider the following 560-residue polypeptide: MFARMSDLHVLLLMALVGKTACGFSLMSLLESLDPDWTPDQYDYSYEDYNQEENTSSTLTHAENPDWYYTEDQADPCQPNPCEHGGDCLVHGSTFTCSCLAPFSGNKCQKVQNTCKDNPCGRGQCLITQSPPYYRCVCKHPYTGPSCSQVVPVCRPNPCQNGATCSRHKRRSKFTCACPDQFKGKFCEIGSDDCYVGDGYSYRGKMNRTVNQHACLYWNSHLLLQENYNMFMEDAETHGIGEHNFCRNPDADEKPWCFIKVTNDKVKWEYCDVSACSAQDVAYPEESPTEPSTKLPGFDSCGKTEIAERKIKRIYGGFKSTAGKHPWQASLQSSLPLTISMPQGHFCGGALIHPCWVLTAAHCTDIKTRHLKVVLGDQDLKKEEFHEQSFRVEKIFKYSHYNERDEIPHNDIALLKLKPVDGHCALESKYVKTVCLPDGSFPSGSECHISGWGVTETGKGSRQLLDAKVKLIANTLCNSRQLYDHMIDDSMICAGNLQKPGQDTCQGDSGGPLTCEKDGTYYVYGIVSWGLECGKRPGVYTQVTKFLNWIKATIKSESGF.

The N-terminal stretch at 1 to 23 is a signal peptide; the sequence is MFARMSDLHVLLLMALVGKTACG. Asn-54 is a glycosylation site (N-linked (GlcNAc...) asparagine). EGF-like domains are found at residues 73–109, 111–148, and 150–188; these read QADP…NKCQ, VQNT…PSCS, and VVPV…KFCE. 18 disulfide bridges follow: Cys-77-Cys-88, Cys-82-Cys-97, Cys-99-Cys-108, Cys-115-Cys-125, Cys-120-Cys-136, Cys-138-Cys-147, Cys-154-Cys-165, Cys-159-Cys-176, Cys-178-Cys-187, Cys-194-Cys-276, Cys-215-Cys-257, Cys-246-Cys-271, Cys-301-Cys-435, Cys-347-Cys-363, Cys-355-Cys-424, Cys-447-Cys-515, Cys-477-Cys-493, and Cys-505-Cys-533. In terms of domain architecture, Kringle spans 193-276; that stretch reads DCYVGDGYSY…KWEYCDVSAC (84 aa). Asn-207 carries N-linked (GlcNAc...) asparagine glycosylation. The 242-residue stretch at 314-555 folds into the Peptidase S1 domain; that stretch reads IYGGFKSTAG…FLNWIKATIK (242 aa). Active-site charge relay system residues include His-362 and Asp-411. Ser-509 functions as the Charge relay system in the catalytic mechanism.

This sequence belongs to the peptidase S1 family. Heterodimer; disulfide-linked. Heterodimer of a 50 kDa heavy and a 27 kDa light chain linked by a disulfide bond. In terms of processing, proteolytic cleavage at Gly-23 or Met-27 can give rise to the 50 kDa heavy chain (HC) and cleavage at Arg-313 or Lys-319 can give rise to the 27 kDa light chain (LC). The HC can undergo further proteolytic cleavage giving rise to a 26 kDa fragment. The LC can undergo further proteolytic cleavage at Arg-313 leading to a 17-kDa fragment and at Arg-480 leading to a 8-kDa fragment. In terms of tissue distribution, ubiquitously expressed.

The protein localises to the secreted. Cleaves the alpha-chain at multiple sites and the beta-chain between 'Lys-53' and 'Lys-54' but not the gamma-chain of fibrinogen and therefore does not initiate the formation of the fibrin clot and does not cause the fibrinolysis directly. It does not cleave (activate) prothrombin and plasminogen but converts the inactive single chain urinary plasminogen activator (pro-urokinase) to the active two chain form. Activates coagulation factor VII. May function as a tumor suppressor negatively regulating cell proliferation and cell migration. The protein is Factor VII-activating protease of Homo sapiens (Human).